The chain runs to 261 residues: Triosephosphate isomerase (261 aa).

10–12 (NWK) serves as a coordination point for substrate. The active-site Electrophile is His100. Residue Glu172 is the Proton acceptor of the active site. Residues Gly178, Ser218, and 239–240 (GG) contribute to the substrate site.

It belongs to the triosephosphate isomerase family. As to quaternary structure, homodimer.

Its subcellular location is the cytoplasm. It carries out the reaction D-glyceraldehyde 3-phosphate = dihydroxyacetone phosphate. Its pathway is carbohydrate biosynthesis; gluconeogenesis. The protein operates within carbohydrate degradation; glycolysis; D-glyceraldehyde 3-phosphate from glycerone phosphate: step 1/1. In terms of biological role, involved in the gluconeogenesis. Catalyzes stereospecifically the conversion of dihydroxyacetone phosphate (DHAP) to D-glyceraldehyde-3-phosphate (G3P). The sequence is that of Triosephosphate isomerase from Nocardia farcinica (strain IFM 10152).